The chain runs to 323 residues: Lipoyl synthase (323 aa).

[4Fe-4S] cluster-binding residues include C65, C70, C76, C91, C95, C98, and S304. The Radical SAM core domain maps to 77–293 (FNNGTATFMI…KKEALSIGFT (217 aa)).

The protein belongs to the radical SAM superfamily. Lipoyl synthase family. [4Fe-4S] cluster serves as cofactor.

The protein localises to the cytoplasm. It catalyses the reaction [[Fe-S] cluster scaffold protein carrying a second [4Fe-4S](2+) cluster] + N(6)-octanoyl-L-lysyl-[protein] + 2 oxidized [2Fe-2S]-[ferredoxin] + 2 S-adenosyl-L-methionine + 4 H(+) = [[Fe-S] cluster scaffold protein] + N(6)-[(R)-dihydrolipoyl]-L-lysyl-[protein] + 4 Fe(3+) + 2 hydrogen sulfide + 2 5'-deoxyadenosine + 2 L-methionine + 2 reduced [2Fe-2S]-[ferredoxin]. It participates in protein modification; protein lipoylation via endogenous pathway; protein N(6)-(lipoyl)lysine from octanoyl-[acyl-carrier-protein]: step 2/2. Its function is as follows. Catalyzes the radical-mediated insertion of two sulfur atoms into the C-6 and C-8 positions of the octanoyl moiety bound to the lipoyl domains of lipoate-dependent enzymes, thereby converting the octanoylated domains into lipoylated derivatives. This Buchnera aphidicola subsp. Acyrthosiphon pisum (strain 5A) protein is Lipoyl synthase.